The primary structure comprises 929 residues: Isoleucine--tRNA ligase (929 aa).

The 'HIGH' region motif lies at 58-68; the sequence is PYANGDIHIGH. Glu563 lines the L-isoleucyl-5'-AMP pocket. The 'KMSKS' region signature appears at 605 to 609; that stretch reads KMSKS. Lys608 provides a ligand contact to ATP. Cys892, Cys895, Cys912, and Cys915 together coordinate Zn(2+).

It belongs to the class-I aminoacyl-tRNA synthetase family. IleS type 1 subfamily. Monomer. Zn(2+) is required as a cofactor.

Its subcellular location is the cytoplasm. It catalyses the reaction tRNA(Ile) + L-isoleucine + ATP = L-isoleucyl-tRNA(Ile) + AMP + diphosphate. Its function is as follows. Catalyzes the attachment of isoleucine to tRNA(Ile). As IleRS can inadvertently accommodate and process structurally similar amino acids such as valine, to avoid such errors it has two additional distinct tRNA(Ile)-dependent editing activities. One activity is designated as 'pretransfer' editing and involves the hydrolysis of activated Val-AMP. The other activity is designated 'posttransfer' editing and involves deacylation of mischarged Val-tRNA(Ile). In Neisseria meningitidis serogroup A / serotype 4A (strain DSM 15465 / Z2491), this protein is Isoleucine--tRNA ligase.